The sequence spans 305 residues: GTPase Era (305 aa).

The Era-type G domain occupies 11–181; sequence RSGFISFVGR…LDVITRLLPE (171 aa). Residues 19 to 26 are G1; it reads GRPNTGKS. 19–26 contacts GTP; that stretch reads GRPNTGKS. The G2 stretch occupies residues 45–49; sequence ETTRH. The segment at 66-69 is G3; it reads DTPG. Residues 66–70 and 130–133 each bind GTP; these read DTPGL and TKVD. Residues 130-133 are G4; it reads TKVD. The interval 160-162 is G5; the sequence is VSA. Residues 212 to 291 enclose the KH type-2 domain; that stretch reads LKDELPHSVA…YLDLRIKVLK (80 aa).

The protein belongs to the TRAFAC class TrmE-Era-EngA-EngB-Septin-like GTPase superfamily. Era GTPase family. As to quaternary structure, monomer.

Its subcellular location is the cytoplasm. It localises to the cell membrane. In terms of biological role, an essential GTPase that binds both GDP and GTP, with rapid nucleotide exchange. Plays a role in 16S rRNA processing and 30S ribosomal subunit biogenesis and possibly also in cell cycle regulation and energy metabolism. The chain is GTPase Era from Corynebacterium diphtheriae (strain ATCC 700971 / NCTC 13129 / Biotype gravis).